Consider the following 1342-residue polypeptide: DNA-directed RNA polymerase subunit beta (1342 aa).

It belongs to the RNA polymerase beta chain family. The RNAP catalytic core consists of 2 alpha, 1 beta, 1 beta' and 1 omega subunit. When a sigma factor is associated with the core the holoenzyme is formed, which can initiate transcription.

The catalysed reaction is RNA(n) + a ribonucleoside 5'-triphosphate = RNA(n+1) + diphosphate. In terms of biological role, DNA-dependent RNA polymerase catalyzes the transcription of DNA into RNA using the four ribonucleoside triphosphates as substrates. The protein is DNA-directed RNA polymerase subunit beta of Citrobacter koseri (strain ATCC BAA-895 / CDC 4225-83 / SGSC4696).